We begin with the raw amino-acid sequence, 341 residues long: MFNQNSPIISVEQLNKEIANHRILHRISFSVYPGEIVGIIGHSGSGKSTLLRCLDFLIEPTSGSISIAGFHTSSPIEKISRTAFAKRVAYVSQSCGLFLAKTVFENIAYPLKIRCPEMTKALIEEKVDDVLHFFNLYERKHAYPSRLSGGQKQKVAIAIAIVSDPRVLLCDEITSALDPRSTEDVVDKLSQLNEERGITQVFVSHEIEIVKKLCCQTLVMHQGSIEESGPTEQLFLNPQSAITEELFHMQSIAKGIYEHGENEEILRLGFPKGLAVQGMISQLIQSGGISINILSGDIHLFRKTPLGFLIVALSGGKEQRDWAKSSLREKGVIVKQFQKSR.

The region spanning 9-247 is the ABC transporter domain; that stretch reads ISVEQLNKEI…PQSAITEELF (239 aa). 41–48 lines the ATP pocket; the sequence is GHSGSGKS.

It belongs to the ABC transporter superfamily. Methionine importer (TC 3.A.1.24) family. As to quaternary structure, the complex is composed of two ATP-binding proteins (MetN), two transmembrane proteins (MetI) and a solute-binding protein (MetQ).

It is found in the cell inner membrane. The catalysed reaction is L-methionine(out) + ATP + H2O = L-methionine(in) + ADP + phosphate + H(+). It catalyses the reaction D-methionine(out) + ATP + H2O = D-methionine(in) + ADP + phosphate + H(+). In terms of biological role, part of the ABC transporter complex MetNIQ involved in methionine import. Responsible for energy coupling to the transport system. The polypeptide is Methionine import ATP-binding protein MetN (Chlamydia abortus (strain DSM 27085 / S26/3) (Chlamydophila abortus)).